The sequence spans 141 residues: Hemoglobin subunit alpha (141 aa).

One can recognise a Globin domain in the interval Val1–Arg141. Ser3 is modified (phosphoserine). Lys7 bears the N6-succinyllysine mark. Position 8 is a phosphothreonine (Thr8). Lys11 carries the N6-succinyllysine modification. At Lys16 the chain carries N6-acetyllysine; alternate. Lys16 bears the N6-succinyllysine; alternate mark. Tyr24 carries the post-translational modification Phosphotyrosine. Lys40 carries the post-translational modification N6-succinyllysine. Ser49 carries the phosphoserine modification. His58 is a binding site for O2. Residue His87 participates in heme b binding. The residue at position 102 (Ser102) is a Phosphoserine. Phosphothreonine is present on Thr108. Ser124 is subject to Phosphoserine. 2 positions are modified to phosphothreonine: Thr134 and Thr137. At Ser138 the chain carries Phosphoserine.

It belongs to the globin family. As to quaternary structure, heterotetramer of two alpha chains and two beta chains. As to expression, red blood cells.

Its function is as follows. Involved in oxygen transport from the lung to the various peripheral tissues. In terms of biological role, hemopressin acts as an antagonist peptide of the cannabinoid receptor CNR1. Hemopressin-binding efficiently blocks cannabinoid receptor CNR1 and subsequent signaling. The sequence is that of Hemoglobin subunit alpha (HBA) from Camelus dromedarius (Dromedary).